The sequence spans 71 residues: Small ribosomal subunit protein bS21 (71 aa).

It belongs to the bacterial ribosomal protein bS21 family.

The chain is Small ribosomal subunit protein bS21 from Hydrogenovibrio crunogenus (strain DSM 25203 / XCL-2) (Thiomicrospira crunogena).